The primary structure comprises 585 residues: Cytochrome P450 monooxygenase AOL_s00215g278 (585 aa).

Heme is bound at residue Cys-518.

This sequence belongs to the cytochrome P450 family. Heme is required as a cofactor.

The protein operates within secondary metabolite biosynthesis; terpenoid biosynthesis. Its function is as follows. Cytochrome P450 monooxygenase; part of the gene cluster that mediates the biosynthesis of sesquiterpenyl epoxy-cyclohexenoids (SECs) such as anthrobotrisins and arthrosporols, metabolites that possess a novel hybrid carbon skeleton consisting of a polyketide-derived epoxycyclohexenol combined with a terpenoid-derived monocyclic sesquiterpenol substructure (PKS-PTS hybrid). The SEC pathway plays an important role for fungal soil colonization via decreasing fungal nematode-capturing ability. Within the pathway, the cytochrome P450 monooxygenase AOL_s00215g278 plays a role in the oxygenation of the phenol moiety, most likely in the epoxy formation. The pathway begins with the biosynthesis of 6-methylsalicylic acid (6-MSA), the first precursor of the polyketide-derived epoxycyclohexenol in arthrosporols, by the polyketide synthase (PKS) AOL_s00215g283 via condensation of 1 acetate and 3 malonate units. The 6-methylsalicylic acid decarboxylase AOL_s00215g281 then catalyzes the decarboxylation of 6-methylsalicylic acid to yield m-cresol. The cytochrome P450 monooxygenase AOL_s00215g282 further oxidizes m-cresol to yield toluquinol. With the assistance of the oxidoreductase AOL_s00215g277, the polyprenyl transferase AOL_s00215g276 catalyzes the farnesylation of toluquinol to produce farnesyl hydroquinone, the hybrid precursor for biosynthesis of SECs. Farnesyl hydroquinone undergoes epoxidation and then subsequent dehydrogenation to form farnesyl epoxy-quinone, the first and simplest SEC. The cytochrome P450 monooxygenase AOL_s00215g278 and the FAD-dependent monooxygenase AOL_s00215g279 might be involved in the oxygenation of the phenol moiety, most likely in the epoxy formation. The cytochrome P450 monooxygenases AOL_s00215g274 and AOL_s00215g280 are involved in specific regional ketone reductions at respectively C-4 and C-1 of farnesyl epoxy-quinone PubMed:33823587. This is Cytochrome P450 monooxygenase AOL_s00215g278 from Arthrobotrys oligospora (strain ATCC 24927 / CBS 115.81 / DSM 1491) (Nematode-trapping fungus).